Reading from the N-terminus, the 437-residue chain is Sonic hedgehog protein (437 aa).

Positions 1 to 24 (MLLLLARCFLVILASSLLVCPGLA) are cleaved as a signal peptide. Cys-25 is lipidated: N-palmitoyl cysteine. A Cardin-Weintraub motif is present at residues 33–39 (KRRHPKK). Ca(2+) contacts are provided by Glu-90, Glu-91, Asp-96, Thr-126, Glu-127, Asp-130, and Asp-132. His-141, Asp-148, and His-183 together coordinate Zn(2+). A lipid anchor (Cholesterol glycine ester) is attached at Gly-198. Asn-279 carries an N-linked (GlcNAc...) asparagine glycan.

The protein belongs to the hedgehog family. Interacts with HHATL/GUP1 which negatively regulates HHAT-mediated palmitoylation of the SHH N-terminus. Interacts with BOC and CDON. Interacts with HHIP. Interacts with DISP1 via its cholesterol anchor. Interacts with SCUBE2. Interacts with glypican GPC3. In terms of assembly, multimer. Post-translationally, the C-terminal domain displays an autoproteolysis activity and a cholesterol transferase activity. Both activities result in the cleavage of the full-length protein and covalent attachment of a cholesterol moiety to the C-terminal of the newly generated N-terminal fragment (ShhN). Cholesterylation is required for the sonic hedgehog protein N-product targeting to lipid rafts and multimerization. ShhN is the active species in both local and long-range signaling, whereas the C-product (ShhC) is degraded in the endoplasmic reticulum. In terms of processing, N-palmitoylation by HHAT of ShhN is required for sonic hedgehog protein N-product multimerization and full activity. It is a prerequisite for the membrane-proximal positioning and the subsequent shedding of this N-terminal peptide. The lipidated N- and C-terminal peptides of ShhNp can be cleaved (shedding). The N-terminal palmitoylated peptide is cleaved at the Cardin-Weintraub (CW) motif site. The cleavage reduced the interactions with heparan sulfate. The cleavage is enhanced by SCUBE2. As to expression, expressed in a number of embryonic tissues including the notochord, ventral neural tube, floor plate, lung bud, zone of polarizing activity and posterior distal mesenchyme of limbs. In the adult, expressed in lung and neural retina.

It is found in the endoplasmic reticulum membrane. It localises to the golgi apparatus membrane. Its subcellular location is the cell membrane. The enzyme catalyses glycyl-L-cysteinyl-[protein] + cholesterol + H(+) = [protein]-C-terminal glycyl cholesterol ester + N-terminal L-cysteinyl-[protein]. The C-terminal part of the sonic hedgehog protein precursor displays an autoproteolysis and a cholesterol transferase activity. Both activities result in the cleavage of the full-length protein into two parts (ShhN and ShhC) followed by the covalent attachment of a cholesterol moiety to the C-terminal of the newly generated ShhN. Both activities occur in the reticulum endoplasmic. Once cleaved, ShhC is degraded in the endoplasmic reticulum. Its function is as follows. The dually lipidated sonic hedgehog protein N-product (ShhNp) is a morphogen which is essential for a variety of patterning events during development. Induces ventral cell fate in the neural tube and somites. Involved in the patterning of the anterior-posterior axis of the developing limb bud. Essential for axon guidance. Binds to the patched (PTCH1) receptor, which functions in association with smoothened (SMO), to activate the transcription of target genes. In the absence of SHH, PTCH1 represses the constitutive signaling activity of SMO. The polypeptide is Sonic hedgehog protein (Mus musculus (Mouse)).